Here is a 352-residue protein sequence, read N- to C-terminus: Protein Wnt-11 (352 aa).

The first 22 residues, 1–22 (MKIYFLLGTFLTFLLHTRICQG), serve as a signal peptide directing secretion. Residues N38 and N88 are each glycosylated (N-linked (GlcNAc...) asparagine). 5 cysteine pairs are disulfide-bonded: C78–C89, C128–C136, C138–C155, C207–C221, and C209–C216. S213 carries O-palmitoleoyl serine; by PORCN lipidation. Residues Y273 and Y280 each carry the sulfotyrosine modification. Disulfide bonds link C281/C312, C297/C307, C311/C351, C327/C342, C329/C339, and C334/C335. N-linked (GlcNAc...) asparagine glycosylation is present at N298.

It belongs to the Wnt family. In terms of processing, glycosylation is required for protein secretion. Post-translationally, palmitoleoylation is required for efficient binding to frizzled receptors. Depalmitoleoylation leads to Wnt signaling pathway inhibition. In terms of tissue distribution, in embryos, expressed in the neural tube, dorsal somite, mesenchymal cells within the dorsal fin, branchial arches and heart muscle, becoming expressed throughout the myocardium by the tadpole stage (stage 45). Prior to neural crest cell migration, expressed in a domain flanking the neural crest on the medial or neural (the opposite side to wnt11b). Weakly expressed in the developing pronephros from stage 25, with expression increasing from stages 30 to 35.

It is found in the secreted. It localises to the extracellular space. The protein localises to the extracellular matrix. In terms of biological role, ligand for members of the frizzled family of seven transmembrane receptors. Shares much functionality with wnt11b. Signals through a non-canonical Wnt pathway to activate Jun-N-terminal kinase (JNK) to regulate gastrulation movements. Acts in a non-cell-autonomous manner to control neural crest migration, probably acting as an extracellular signal from surrounding tissue, but is not required for neural crest induction. Acts redundantly with wnt11b during pronephros induction. Regulates cardiac morphogenesis through the activation of JNK, but is not required for cardiac differentiation. Essential for dorsal fin development; required for an epithelial to mesenchymal transformation event prior to migration of cells into the fin, and ultimately for maintenance of fin structure. Mediates dorsal fin development through a non-canonical pathway mediated by Ca(2+). This is Protein Wnt-11 from Xenopus laevis (African clawed frog).